The following is a 367-amino-acid chain: NADH-quinone oxidoreductase subunit H (367 aa).

Helical transmembrane passes span 18 to 38, 87 to 107, 132 to 152, 180 to 200, 204 to 224, 257 to 277, 291 to 311, and 328 to 348; these read VLLFLKIIIVIISVMVSVAYL, LCFLIAPVITFTLALLGWAVI, IGVLYILAISSLGVYGIIIAG, LTIVTVLLATGSLKLGEIVIA, MPYWIDLLLLPMAFMFFISAL, FFLGEYANMILMSAMAVIFFF, IIPGTIWFIFKIVILLFCFIW, and GWKVFLPISLFWVILVSGILV.

Belongs to the complex I subunit 1 family. In terms of assembly, NDH-1 is composed of 14 different subunits. Subunits NuoA, H, J, K, L, M, N constitute the membrane sector of the complex.

It is found in the cell inner membrane. The enzyme catalyses a quinone + NADH + 5 H(+)(in) = a quinol + NAD(+) + 4 H(+)(out). Functionally, NDH-1 shuttles electrons from NADH, via FMN and iron-sulfur (Fe-S) centers, to quinones in the respiratory chain. The immediate electron acceptor for the enzyme in this species is believed to be ubiquinone. Couples the redox reaction to proton translocation (for every two electrons transferred, four hydrogen ions are translocated across the cytoplasmic membrane), and thus conserves the redox energy in a proton gradient. This subunit may bind ubiquinone. The protein is NADH-quinone oxidoreductase subunit H of Ehrlichia ruminantium (strain Gardel).